Reading from the N-terminus, the 252-residue chain is tRNA (guanine-N(1)-)-methyltransferase (252 aa).

S-adenosyl-L-methionine-binding positions include glycine 113 and isoleucine 133–leucine 138.

The protein belongs to the RNA methyltransferase TrmD family. Homodimer.

The protein resides in the cytoplasm. It catalyses the reaction guanosine(37) in tRNA + S-adenosyl-L-methionine = N(1)-methylguanosine(37) in tRNA + S-adenosyl-L-homocysteine + H(+). Functionally, specifically methylates guanosine-37 in various tRNAs. The chain is tRNA (guanine-N(1)-)-methyltransferase from Baumannia cicadellinicola subsp. Homalodisca coagulata.